Consider the following 775-residue polypeptide: Kojibiose phosphorylase (775 aa).

A substrate-binding site is contributed by 361–362 (WD). The Proton donor role is filled by Glu501. 614-615 (KQ) contributes to the substrate binding site.

It belongs to the glycosyl hydrolase 65 family. Homohexamer.

The catalysed reaction is kojibiose + phosphate = beta-D-glucose 1-phosphate + D-glucose. Inhibited by Hg(2+) and Pb(2+). Its function is as follows. Catalyzes the reversible phosphorolysis of kojibiose into beta-D-glucose 1-phosphate (Glc1P) and D-glucose. Can act with alpha-1,2-oligoglucans, such as selaginose, but more slowly. Inactive when disaccharides with linkages other than alpha-1,2 linkages, such as sophorose, trehalose, neotrehalose, nigerose, laminaribiose, maltose, cellobiose, isomaltose, gentiobiose, sucrose and lactose, are used as substrates. In contrast, shows broad specificity for the reverse reaction. Various monosaccharides and disaccharides having a glucosyl residue at the non-reducing end are effective acceptors. This is Kojibiose phosphorylase from Thermoanaerobacter brockii (Thermoanaerobium brockii).